A 680-amino-acid polypeptide reads, in one-letter code: tRNA 5-methylaminomethyl-2-thiouridine biosynthesis bifunctional protein MnmC (680 aa).

Residues 1–245 (MSHPPIQTAT…KREMLTGILP (245 aa)) form a tRNA (mnm(5)s(2)U34)-methyltransferase region. An FAD-dependent cmnm(5)s(2)U34 oxidoreductase region spans residues 270–680 (IGGGIVSALT…PVQQRVSVLS (411 aa)).

It in the N-terminal section; belongs to the methyltransferase superfamily. tRNA (mnm(5)s(2)U34)-methyltransferase family. In the C-terminal section; belongs to the DAO family. FAD serves as cofactor.

The protein localises to the cytoplasm. It catalyses the reaction 5-aminomethyl-2-thiouridine(34) in tRNA + S-adenosyl-L-methionine = 5-methylaminomethyl-2-thiouridine(34) in tRNA + S-adenosyl-L-homocysteine + H(+). In terms of biological role, catalyzes the last two steps in the biosynthesis of 5-methylaminomethyl-2-thiouridine (mnm(5)s(2)U) at the wobble position (U34) in tRNA. Catalyzes the FAD-dependent demodification of cmnm(5)s(2)U34 to nm(5)s(2)U34, followed by the transfer of a methyl group from S-adenosyl-L-methionine to nm(5)s(2)U34, to form mnm(5)s(2)U34. This Yersinia enterocolitica serotype O:8 / biotype 1B (strain NCTC 13174 / 8081) protein is tRNA 5-methylaminomethyl-2-thiouridine biosynthesis bifunctional protein MnmC.